The following is a 496-amino-acid chain: MKKYKFLFAISIIAIGLMTVLLASINEKKEEKENLLSVPKIEKWETKNEEFRKFYPREFDSWKQTKNSDQIDDMLKLHPEMVVLWAGYAFSKDYNAPRGHFYAIDDVSNSLRTGAPTDKESGPLPSACWTCKSPDVPRIMHEQGNNEYFTGKWAKYGADIVNPIGCVDCHNPETMELQVGRSYLNDALKAEGKSPTLATATQQDMRTLVCAQCHVEYYFKKTPLENGKTAMAVTLPWANGTTVEDMEKYYDTIEFSDWVHQVSKTPMIKAQHPEYETWKTGAHGRNNVSCADCHMPYTQEGGIKYTDHKIGNPLENMDKTCMNCHRVSEKSLLANIQDKKARKDDLNQKAMEQIVAAHLEAGKAWEVGATPEEMKDILTDIRHAQWRWDFAAASHSAFFHAPEETLKTLGTAIEKAGNARIKLAKVLAKHGVTDYKAPTITDKKQAQELIGLPMGKLIEEKKQFTNGLLKDWKNEAEQKGLYNPKSREGVETKTSY.

Positions 1–23 (MKKYKFLFAISIIAIGLMTVLLA) are cleaved as a signal peptide. His-100 is a binding site for heme c. Heme-binding residues include Cys-128, Cys-131, and Lys-132. Heme c is bound by residues Cys-166, Cys-169, His-170, Cys-210, Cys-213, and His-214. 4 residues coordinate Ca(2+): Glu-216, Tyr-217, Lys-269, and Gln-271. Residue Tyr-217 participates in substrate binding. His-272 serves as a coordination point for substrate. Heme c-binding residues include His-283, Cys-290, Cys-293, His-294, His-308, Cys-321, Cys-324, His-325, and His-400.

Belongs to the cytochrome c-552 family. Requires Ca(2+) as cofactor. The cofactor is heme c.

The protein resides in the periplasm. The enzyme catalyses 6 Fe(III)-[cytochrome c] + NH4(+) + 2 H2O = 6 Fe(II)-[cytochrome c] + nitrite + 8 H(+). The protein operates within nitrogen metabolism; nitrate reduction (assimilation). Catalyzes the reduction of nitrite to ammonia, consuming six electrons in the process. The protein is Cytochrome c-552 of Aliarcobacter butzleri (strain RM4018) (Arcobacter butzleri).